Reading from the N-terminus, the 807-residue chain is Glycerol-3-phosphate acyltransferase (807 aa).

Positions 305–310 (CHRSHM) match the HXXXXD motif motif.

This sequence belongs to the GPAT/DAPAT family.

It localises to the cell inner membrane. The enzyme catalyses sn-glycerol 3-phosphate + an acyl-CoA = a 1-acyl-sn-glycero-3-phosphate + CoA. It participates in phospholipid metabolism; CDP-diacylglycerol biosynthesis; CDP-diacylglycerol from sn-glycerol 3-phosphate: step 1/3. The protein is Glycerol-3-phosphate acyltransferase of Klebsiella pneumoniae (strain 342).